Here is a 151-residue protein sequence, read N- to C-terminus: D-aminoacyl-tRNA deacylase (151 aa).

The short motif at 142–143 (GP) is the Gly-cisPro motif, important for rejection of L-amino acids element.

This sequence belongs to the DTD family. Homodimer.

Its subcellular location is the cytoplasm. The catalysed reaction is glycyl-tRNA(Ala) + H2O = tRNA(Ala) + glycine + H(+). It carries out the reaction a D-aminoacyl-tRNA + H2O = a tRNA + a D-alpha-amino acid + H(+). In terms of biological role, an aminoacyl-tRNA editing enzyme that deacylates mischarged D-aminoacyl-tRNAs. Also deacylates mischarged glycyl-tRNA(Ala), protecting cells against glycine mischarging by AlaRS. Acts via tRNA-based rather than protein-based catalysis; rejects L-amino acids rather than detecting D-amino acids in the active site. By recycling D-aminoacyl-tRNA to D-amino acids and free tRNA molecules, this enzyme counteracts the toxicity associated with the formation of D-aminoacyl-tRNA entities in vivo and helps enforce protein L-homochirality. In Psychrobacter cryohalolentis (strain ATCC BAA-1226 / DSM 17306 / VKM B-2378 / K5), this protein is D-aminoacyl-tRNA deacylase.